Here is a 347-residue protein sequence, read N- to C-terminus: Anthranilate phosphoribosyltransferase (347 aa).

5-phospho-alpha-D-ribose 1-diphosphate is bound by residues G82, 85–86 (GD), T90, 92–95 (NIST), 110–118 (KHGNRAITS), and T122. Residue G82 coordinates anthranilate. A Mg(2+)-binding site is contributed by S94. N113 serves as a coordination point for anthranilate. R168 contacts anthranilate. D226 and E227 together coordinate Mg(2+).

This sequence belongs to the anthranilate phosphoribosyltransferase family. As to quaternary structure, homodimer. The cofactor is Mg(2+).

The catalysed reaction is N-(5-phospho-beta-D-ribosyl)anthranilate + diphosphate = 5-phospho-alpha-D-ribose 1-diphosphate + anthranilate. The protein operates within amino-acid biosynthesis; L-tryptophan biosynthesis; L-tryptophan from chorismate: step 2/5. Its function is as follows. Catalyzes the transfer of the phosphoribosyl group of 5-phosphorylribose-1-pyrophosphate (PRPP) to anthranilate to yield N-(5'-phosphoribosyl)-anthranilate (PRA). This Caulobacter sp. (strain K31) protein is Anthranilate phosphoribosyltransferase.